Here is a 349-residue protein sequence, read N- to C-terminus: 2-oxoglutarate and iron-dependent oxygenase domain-containing protein 2 (349 aa).

The Fe2OG dioxygenase domain maps to 214–308 (DSHRAFVVKY…RWNLVVWLRA (95 aa)). Positions 234, 236, and 289 each coordinate Fe cation. 2-oxoglutarate is bound at residue Arg-299.

This sequence belongs to the OGFOD2 family. Fe(2+) serves as cofactor. L-ascorbate is required as a cofactor.

The sequence is that of 2-oxoglutarate and iron-dependent oxygenase domain-containing protein 2 (Ogfod2) from Mus musculus (Mouse).